Here is an 887-residue protein sequence, read N- to C-terminus: Exosome complex component 10 (887 aa).

A compositionally biased stretch (basic and acidic residues) spans 1-10 (MAPPSPREHQ). A disordered region spans residues 1–23 (MAPPSPREHQSAPATSATKPDAE). A Glycyl lysine isopeptide (Lys-Gly) (interchain with G-Cter in SUMO2) cross-link involves residue lysine 19. Residues 289 to 455 (HLVSSLDELV…YIYDRMRLEL (167 aa)) form the 3'-5' exonuclease domain. Mg(2+) contacts are provided by aspartate 313, glutamate 315, aspartate 371, and aspartate 440. Positions 503–583 (NSQQLTAFQL…QQAREMPLLK (81 aa)) constitute an HRDC domain. Lysine 583 participates in a covalent cross-link: Glycyl lysine isopeptide (Lys-Gly) (interchain with G-Cter in SUMO1); alternate. Residue lysine 583 forms a Glycyl lysine isopeptide (Lys-Gly) (interchain with G-Cter in SUMO2); alternate linkage. Lysine 710 participates in a covalent cross-link: Glycyl lysine isopeptide (Lys-Gly) (interchain with G-Cter in SUMO2). Disordered stretches follow at residues 734–757 (KEPKEATKKKVAEQTAAREEAKEE) and 777–887 (NATK…WPKR). Residues 778-796 (ATKKRERATSDLRTIEQKQ) show a composition bias toward basic and acidic residues. Phosphoserine is present on serine 823. Glycyl lysine isopeptide (Lys-Gly) (interchain with G-Cter in SUMO2) cross-links involve residues lysine 835, lysine 861, and lysine 875.

It belongs to the exosome component 10/RRP6 family. In terms of assembly, component of the RNA exosome complex. The catalytically inactive RNA exosome core complex (Exo-9) associates with the catalytic subunit EXOSC10/RRP6 (via its N-terminus). Exo-9 may associate with DIS3 to form the nucleolar exosome complex, or DIS3L to form the cytoplasmic exosome complex. The RNA exosome complex interacts with cofactors C1D/RRP47, MPHOSPH6/MPP6 and MTREX/MTR4. Interacts with MTREX; the interaction with MTREX mediates the association of MTREX with nuclear RNA exosomes. Part of the small subunit (SSU) processome, composed of more than 70 proteins and the RNA chaperone small nucleolar RNA (snoRNA) U3. Interacts with ALYREF/THOC4. Interacts with DHX36; this interaction occurs in a RNase-insensitive manner. Interacts with NRDE2. Interacts (via C-terminus) with USP36 (via C-terminus); the interaction is facilitated by the association with RNA and promotes sumoylation of EXOSC10. Mg(2+) serves as cofactor. In terms of processing, sumoylated by USP36; sumoylation does not significantly affect EXOSC10 nucleolar localization and association with core exosome and USP36, but regulates the nucleolar RNA exosome activity in rRNA processing by promoting binding of EXOSC10 to pre-rRNAs. Effects of sumoylation on EXOSC10 levels vary between different studies. Sumoylation of EXOSC10 is required for the modulation of EXOSC10 effects on cellular protein translation and cell proliferation. Sumoylation is promoted by mild hypothermia. As to expression, expressed in ovary (at protein level). Expressed in testis (at protein level). Expressed in lung (at protein level).

The protein localises to the cytoplasm. It localises to the nucleus. The protein resides in the nucleolus. It is found in the nucleoplasm. Catalytic component of the RNA exosome complex which has 3'-&gt;5' exoribonuclease activity and participates in a multitude of cellular RNA processing and degradation events. In the nucleus, the RNA exosome complex is involved in proper maturation of stable RNA species such as rRNA, snRNA and snoRNA, in the elimination of RNA processing by-products and non-coding 'pervasive' transcripts, such as antisense RNA species and promoter-upstream transcripts (PROMPTs), and of mRNAs with processing defects, thereby limiting or excluding their export to the cytoplasm. Part of the small subunit (SSU) processome, first precursor of the small eukaryotic ribosomal subunit. During the assembly of the SSU processome in the nucleolus, many ribosome biogenesis factors, an RNA chaperone and ribosomal proteins associate with the nascent pre-rRNA and work in concert to generate RNA folding, modifications, rearrangements and cleavage as well as targeted degradation of pre-ribosomal RNA by the RNA exosome. The RNA exosome may be involved in Ig class switch recombination (CSR) and/or Ig variable region somatic hypermutation (SHM) by targeting AICDA deamination activity to transcribed dsDNA substrates. In the cytoplasm, the RNA exosome complex is involved in general mRNA turnover and specifically degrades inherently unstable mRNAs containing AU-rich elements (AREs) within their 3' untranslated regions, and in RNA surveillance pathways, preventing translation of aberrant mRNAs. It seems to be involved in degradation of histone mRNA. EXOSC10 is required for nucleolar localization of C1D and probably mediates the association of MTREX, C1D and MPHOSPH6 with the RNA exosome involved in the maturation of 5.8S rRNA. Plays a role in the recruitment of replication protein A complex (RPA) and RAD51 to DNA double-strand breaks caused by irradiation, contributing to DNA repair by homologous recombination. Regulates levels of damage-induced RNAs in order to prevent DNA-RNA hybrid formation at DNA double-strand breaks and limit DNA end resection after damage. Plays a role in oocyte development, maturation and survival. Required for normal testis development and mitotic division of spermatogonia. Plays a role in proper embryo development. Required for global protein translation. Required for cell proliferation. In Mus musculus (Mouse), this protein is Exosome complex component 10 (Exosc10).